Consider the following 402-residue polypeptide: Transcription regulatory protein OpdE (402 aa).

12 consecutive transmembrane segments (helical) span residues 22-42 (VLAI…PVSL), 60-80 (GIAI…SVAG), 86-106 (TLLL…ALAP), 108-128 (YFVY…FWSM), 147-167 (ALVN…GAWL), 170-190 (LIGW…ALAW), 220-240 (PGVM…FSLF), 256-276 (AHVS…TLLI), 296-316 (ALIA…VVLL), 318-338 (LWGL…ARVF), 348-368 (LFVA…GLLF), and 375-395 (ATFF…ILTA).

It to B.subtilis YwfA.

The protein localises to the cell membrane. In terms of biological role, regulates the expression of oprD which encodes the imipenem-specific porin. This is Transcription regulatory protein OpdE (opdE) from Pseudomonas aeruginosa (strain ATCC 15692 / DSM 22644 / CIP 104116 / JCM 14847 / LMG 12228 / 1C / PRS 101 / PAO1).